The chain runs to 411 residues: RING-H2 finger protein ATL65 (411 aa).

Residues Met-1–Ser-32 are disordered. The segment covering Ser-10–Ser-21 has biased composition (low complexity). The chain crosses the membrane as a helical span at residues Leu-36–Val-56. The segment at Cys-156–Arg-198 adopts an RING-type; atypical zinc-finger fold.

Belongs to the RING-type zinc finger family. ATL subfamily.

The protein localises to the membrane. It catalyses the reaction S-ubiquitinyl-[E2 ubiquitin-conjugating enzyme]-L-cysteine + [acceptor protein]-L-lysine = [E2 ubiquitin-conjugating enzyme]-L-cysteine + N(6)-ubiquitinyl-[acceptor protein]-L-lysine.. It participates in protein modification; protein ubiquitination. The protein is RING-H2 finger protein ATL65 (ATL65) of Arabidopsis thaliana (Mouse-ear cress).